We begin with the raw amino-acid sequence, 443 residues long: Serine/threonine-protein phosphatase 2A 55 kDa regulatory subunit B beta isoform (443 aa).

7 WD repeats span residues 22 to 61, 87 to 128, 171 to 209, 220 to 260, 279 to 317, 334 to 375, and 410 to 443; these read TEAD…KSQP, EIEE…KRPE, AHTY…RSFN, ELTE…LCDN, EIIS…KPLE, ENDC…DVTL, and DFSK…DKVN.

This sequence belongs to the phosphatase 2A regulatory subunit B family. As to quaternary structure, PP2A consists of a common heterodimeric core enzyme, composed of a 36 kDa catalytic subunit (subunit C) and a 65 kDa constant regulatory subunit (PR65 or subunit A), that associates with a variety of regulatory subunits.

The protein localises to the cytoplasm. Its subcellular location is the cytoskeleton. The protein resides in the membrane. Functionally, the B regulatory subunit might modulate substrate selectivity and catalytic activity, and might also direct the localization of the catalytic enzyme to a particular subcellular compartment. The protein is Serine/threonine-protein phosphatase 2A 55 kDa regulatory subunit B beta isoform (ppp2r2b) of Carassius auratus (Goldfish).